A 502-amino-acid chain; its full sequence is ATP synthase subunit alpha (502 aa).

The tract at residues 119–139 (GPIATTKSRPIESPAPGVMDR) is disordered. 169-176 (GDRQTGKT) provides a ligand contact to ATP.

Belongs to the ATPase alpha/beta chains family. As to quaternary structure, F-type ATPases have 2 components, CF(1) - the catalytic core - and CF(0) - the membrane proton channel. CF(1) has five subunits: alpha(3), beta(3), gamma(1), delta(1), epsilon(1). CF(0) has three main subunits: a(1), b(2) and c(9-12). The alpha and beta chains form an alternating ring which encloses part of the gamma chain. CF(1) is attached to CF(0) by a central stalk formed by the gamma and epsilon chains, while a peripheral stalk is formed by the delta and b chains.

It localises to the cell membrane. It catalyses the reaction ATP + H2O + 4 H(+)(in) = ADP + phosphate + 5 H(+)(out). Produces ATP from ADP in the presence of a proton gradient across the membrane. The alpha chain is a regulatory subunit. In Alkalihalophilus pseudofirmus (strain ATCC BAA-2126 / JCM 17055 / OF4) (Bacillus pseudofirmus), this protein is ATP synthase subunit alpha.